The sequence spans 394 residues: Candidapepsin (394 aa).

A signal peptide spans 1–23 (MATIFLFTKNVFIALAFALFAQG). Residues 24-60 (LTIPDGIEKRTDKVVSLDFTVIRKPFNATAHRLIQKR) constitute a propeptide, activation peptide. Asn-50 carries an N-linked (GlcNAc...) asparagine glycan. The region spanning 74–381 (YAADIVVGSN…DLDDKTISLA (308 aa)) is the Peptidase A1 domain. Asp-92 is a catalytic residue. A disulfide bridge connects residues Cys-107 and Cys-119. Asp-278 is a catalytic residue. Cys-314 and Cys-347 are oxidised to a cystine.

Belongs to the peptidase A1 family. Post-translationally, O-glycosylated.

Its subcellular location is the secreted. The enzyme catalyses Preferential cleavage at the carboxyl of hydrophobic amino acids, but fails to cleave 15-Leu-|-Tyr-16, 16-Tyr-|-Leu-17 and 24-Phe-|-Phe-25 of insulin B chain. Activates trypsinogen, and degrades keratin.. This chain is Candidapepsin (SAPT1), found in Candida tropicalis (Yeast).